Reading from the N-terminus, the 152-residue chain is 3-dehydroquinate dehydratase (152 aa).

Tyr23 serves as the catalytic Proton acceptor. Asn74, His80, and Asp87 together coordinate substrate. The active-site Proton donor is His100. Residues 101–102 (LS) and Arg111 contribute to the substrate site.

It belongs to the type-II 3-dehydroquinase family. As to quaternary structure, homododecamer.

It catalyses the reaction 3-dehydroquinate = 3-dehydroshikimate + H2O. The protein operates within metabolic intermediate biosynthesis; chorismate biosynthesis; chorismate from D-erythrose 4-phosphate and phosphoenolpyruvate: step 3/7. In terms of biological role, catalyzes a trans-dehydration via an enolate intermediate. This is 3-dehydroquinate dehydratase from Clostridium botulinum (strain Langeland / NCTC 10281 / Type F).